The following is a 229-amino-acid chain: Peroxiredoxin 1 (229 aa).

The Thioredoxin domain occupies 33 to 192 (LGPKNKAPDF…AFRTLKAFQF (160 aa)). Catalysis depends on Cys78, which acts as the Cysteine sulfenic acid (-SOH) intermediate.

This sequence belongs to the peroxiredoxin family. AhpC/Prx1 subfamily. As to quaternary structure, homodimer; disulfide-linked, upon oxidation.

It catalyses the reaction a hydroperoxide + [thioredoxin]-dithiol = an alcohol + [thioredoxin]-disulfide + H2O. In terms of biological role, thiol-specific peroxidase that catalyzes the reduction of hydrogen peroxide and organic hydroperoxides to water and alcohols, respectively. Plays a role in cell protection against oxidative stress by detoxifying peroxides and as sensor of hydrogen peroxide-mediated signaling events. The polypeptide is Peroxiredoxin 1 (TSA1) (Brugia malayi (Filarial nematode worm)).